Consider the following 135-residue polypeptide: Small ribosomal subunit protein uS12 (135 aa).

The interval 1–20 (MPTINQLVRKGRHSKVTKSK) is disordered. The span at 9–18 (RKGRHSKVTK) shows a compositional bias: basic residues. Asp102 bears the 3-methylthioaspartic acid mark.

Belongs to the universal ribosomal protein uS12 family. Part of the 30S ribosomal subunit. Contacts proteins S8 and S17. May interact with IF1 in the 30S initiation complex.

Functionally, with S4 and S5 plays an important role in translational accuracy. Interacts with and stabilizes bases of the 16S rRNA that are involved in tRNA selection in the A site and with the mRNA backbone. Located at the interface of the 30S and 50S subunits, it traverses the body of the 30S subunit contacting proteins on the other side and probably holding the rRNA structure together. The combined cluster of proteins S8, S12 and S17 appears to hold together the shoulder and platform of the 30S subunit. This is Small ribosomal subunit protein uS12 from Lactobacillus helveticus (strain DPC 4571).